A 167-amino-acid polypeptide reads, in one-letter code: uncharacterized protein (167 aa).

The disordered stretch occupies residues Ser-140–Phe-167. Positions Lys-145–Lys-154 are enriched in basic residues.

This is an uncharacterized protein from Saccharomyces cerevisiae (strain ATCC 204508 / S288c) (Baker's yeast).